The chain runs to 583 residues: Isocitrate dehydrogenase kinase/phosphatase (583 aa).

ATP is bound by residues 315–321 and K336; that span reads APGIRGM. D371 is an active-site residue.

This sequence belongs to the AceK family.

The protein resides in the cytoplasm. It carries out the reaction L-seryl-[isocitrate dehydrogenase] + ATP = O-phospho-L-seryl-[isocitrate dehydrogenase] + ADP + H(+). Its function is as follows. Bifunctional enzyme which can phosphorylate or dephosphorylate isocitrate dehydrogenase (IDH) on a specific serine residue. This is a regulatory mechanism which enables bacteria to bypass the Krebs cycle via the glyoxylate shunt in response to the source of carbon. When bacteria are grown on glucose, IDH is fully active and unphosphorylated, but when grown on acetate or ethanol, the activity of IDH declines drastically concomitant with its phosphorylation. This Salmonella dublin (strain CT_02021853) protein is Isocitrate dehydrogenase kinase/phosphatase.